We begin with the raw amino-acid sequence, 451 residues long: NADH-quinone oxidoreductase subunit D (451 aa).

It belongs to the complex I 49 kDa subunit family. In terms of assembly, NDH-1 is composed of 14 different subunits. Subunits NuoB, C, D, E, F, and G constitute the peripheral sector of the complex.

It is found in the cell membrane. The enzyme catalyses a quinone + NADH + 5 H(+)(in) = a quinol + NAD(+) + 4 H(+)(out). Its function is as follows. NDH-1 shuttles electrons from NADH, via FMN and iron-sulfur (Fe-S) centers, to quinones in the respiratory chain. The immediate electron acceptor for the enzyme in this species is believed to be a menaquinone. Couples the redox reaction to proton translocation (for every two electrons transferred, four hydrogen ions are translocated across the cytoplasmic membrane), and thus conserves the redox energy in a proton gradient. The chain is NADH-quinone oxidoreductase subunit D from Mycolicibacterium gilvum (strain PYR-GCK) (Mycobacterium gilvum (strain PYR-GCK)).